The chain runs to 675 residues: DNA ligase (675 aa).

Residues 32–36 (DAEYD), 81–82 (SL), and glutamate 113 contribute to the NAD(+) site. Catalysis depends on lysine 115, which acts as the N6-AMP-lysine intermediate. Residues arginine 136, glutamate 173, lysine 291, and lysine 315 each contribute to the NAD(+) site. Zn(2+)-binding residues include cysteine 409, cysteine 412, cysteine 427, and cysteine 433. The BRCT domain maps to 595 to 675 (SEKTYFFNKK…ELNSLIRIKE (81 aa)).

Belongs to the NAD-dependent DNA ligase family. LigA subfamily. It depends on Mg(2+) as a cofactor. The cofactor is Mn(2+).

It carries out the reaction NAD(+) + (deoxyribonucleotide)n-3'-hydroxyl + 5'-phospho-(deoxyribonucleotide)m = (deoxyribonucleotide)n+m + AMP + beta-nicotinamide D-nucleotide.. DNA ligase that catalyzes the formation of phosphodiester linkages between 5'-phosphoryl and 3'-hydroxyl groups in double-stranded DNA using NAD as a coenzyme and as the energy source for the reaction. It is essential for DNA replication and repair of damaged DNA. This Buchnera aphidicola subsp. Acyrthosiphon pisum (strain APS) (Acyrthosiphon pisum symbiotic bacterium) protein is DNA ligase.